Reading from the N-terminus, the 806-residue chain is Leucine--tRNA ligase (806 aa).

The 'HIGH' region motif lies at Pro38 to His48. A 'KMSKS' region motif is present at residues Lys572–Ser576. Residue Lys575 participates in ATP binding.

It belongs to the class-I aminoacyl-tRNA synthetase family.

It localises to the cytoplasm. The catalysed reaction is tRNA(Leu) + L-leucine + ATP = L-leucyl-tRNA(Leu) + AMP + diphosphate. This is Leucine--tRNA ligase from Helicobacter pylori (strain HPAG1).